The sequence spans 408 residues: Glyceraldehyde-3-phosphate dehydrogenase, testis-specific (408 aa).

The interval 1–73 is testis-specific N-terminal extension; it reads MSKRDIVLTN…TPPPKMVSVA (73 aa). A disordered region spans residues 19-68; sequence QPCPVTRAPPPPEPKAEVEPQPQPEPTPVREEIKPPPPPLPPHPATPPPK. The segment covering 53 to 68 has biased composition (pro residues); sequence PPPPPLPPHPATPPPK. NAD(+) contacts are provided by residues 85–86, D106, K151, Y173, and S193; that span reads RI. D-glyceraldehyde 3-phosphate-binding positions include 223–225, T254, 283–284, and R306; these read SCT and TG. C224 (nucleophile) is an active-site residue. N388 serves as a coordination point for NAD(+).

Belongs to the glyceraldehyde-3-phosphate dehydrogenase family. In terms of assembly, homotetramer. Interacts with ARRB2; the interaction is detected in the nucleus upon OR1D2 stimulation. As to expression, testis specific.

The protein resides in the cytoplasm. The catalysed reaction is D-glyceraldehyde 3-phosphate + phosphate + NAD(+) = (2R)-3-phospho-glyceroyl phosphate + NADH + H(+). The protein operates within carbohydrate degradation; glycolysis; pyruvate from D-glyceraldehyde 3-phosphate: step 1/5. May play an important role in regulating the switch between different pathways for energy production during spermiogenesis and in the spermatozoon. Required for sperm motility and male fertility. This chain is Glyceraldehyde-3-phosphate dehydrogenase, testis-specific (GAPDHS), found in Homo sapiens (Human).